Here is a 178-residue protein sequence, read N- to C-terminus: MLAAEEANPLIPDVWEMLITGIGFVILLFIAIKYIVPAFEKVFKDRADAIEGGLAKAKAAQAEAKAARDEYNQQLESARLEAQKIREEARSEGEKILADFKDRANMESARITENAHKAIEAERAAAVVSLRDEVGTLATQLASKIVGESLNDDDRANRVVDRFLADLDAEQGRTGAAR.

A helical membrane pass occupies residues 19–39; sequence ITGIGFVILLFIAIKYIVPAF.

Belongs to the ATPase B chain family. As to quaternary structure, F-type ATPases have 2 components, F(1) - the catalytic core - and F(0) - the membrane proton channel. F(1) has five subunits: alpha(3), beta(3), gamma(1), delta(1), epsilon(1). F(0) has three main subunits: a(1), b(2) and c(10-14). The alpha and beta chains form an alternating ring which encloses part of the gamma chain. F(1) is attached to F(0) by a central stalk formed by the gamma and epsilon chains, while a peripheral stalk is formed by the delta and b chains.

It is found in the cell membrane. In terms of biological role, f(1)F(0) ATP synthase produces ATP from ADP in the presence of a proton or sodium gradient. F-type ATPases consist of two structural domains, F(1) containing the extramembraneous catalytic core and F(0) containing the membrane proton channel, linked together by a central stalk and a peripheral stalk. During catalysis, ATP synthesis in the catalytic domain of F(1) is coupled via a rotary mechanism of the central stalk subunits to proton translocation. Component of the F(0) channel, it forms part of the peripheral stalk, linking F(1) to F(0). The polypeptide is ATP synthase subunit b (Kocuria rhizophila (strain ATCC 9341 / DSM 348 / NBRC 103217 / DC2201)).